A 456-amino-acid chain; its full sequence is 26S proteasome non-ATPase regulatory subunit 12 (456 aa).

Residue A2 is modified to N-acetylalanine. K92 is covalently cross-linked (Glycyl lysine isopeptide (Lys-Gly) (interchain with G-Cter in SUMO1); alternate). Residue K92 forms a Glycyl lysine isopeptide (Lys-Gly) (interchain with G-Cter in SUMO2); alternate linkage. An N6-acetyllysine mark is found at K221 and K368. Positions 242–420 (SICKHYRAIY…GIINFQRPKD (179 aa)) constitute a PCI domain.

The protein belongs to the proteasome subunit p55 family. In terms of assembly, component of the 19S proteasome regulatory particle complex. The 26S proteasome consists of a 20S core particle (CP) and two 19S regulatory subunits (RP). The regulatory particle is made of a lid composed of 9 subunits including PSMD12, a base containing 6 ATPases and few additional components. Interacts with ERCC6.

In terms of biological role, component of the 26S proteasome, a multiprotein complex involved in the ATP-dependent degradation of ubiquitinated proteins. This complex plays a key role in the maintenance of protein homeostasis by removing misfolded or damaged proteins, which could impair cellular functions, and by removing proteins whose functions are no longer required. Therefore, the proteasome participates in numerous cellular processes, including cell cycle progression, apoptosis, or DNA damage repair. The polypeptide is 26S proteasome non-ATPase regulatory subunit 12 (PSMD12) (Homo sapiens (Human)).